Reading from the N-terminus, the 283-residue chain is NFU1 iron-sulfur cluster scaffold homolog, mitochondrial (283 aa).

The transit peptide at 1 to 65 (MSKFLSQAAI…ELRMPVACRR (65 aa)) directs the protein to the mitochondrion. A nifU region spans residues 182–250 (IKELLDTRIR…IPEVESVEQV (69 aa)). Positions 219 and 222 each coordinate [4Fe-4S] cluster.

This sequence belongs to the NifU family.

The protein localises to the mitochondrion. In terms of biological role, molecular scaffold for [Fe-S] cluster assembly of mitochondrial iron-sulfur proteins. This is NFU1 iron-sulfur cluster scaffold homolog, mitochondrial from Drosophila simulans (Fruit fly).